Reading from the N-terminus, the 269-residue chain is 2-dehydro-3-deoxyphosphooctonate aldolase (269 aa).

The protein belongs to the KdsA family.

It localises to the cytoplasm. It carries out the reaction D-arabinose 5-phosphate + phosphoenolpyruvate + H2O = 3-deoxy-alpha-D-manno-2-octulosonate-8-phosphate + phosphate. Its pathway is carbohydrate biosynthesis; 3-deoxy-D-manno-octulosonate biosynthesis; 3-deoxy-D-manno-octulosonate from D-ribulose 5-phosphate: step 2/3. It functions in the pathway bacterial outer membrane biogenesis; lipopolysaccharide biosynthesis. In Chlamydia trachomatis serovar A (strain ATCC VR-571B / DSM 19440 / HAR-13), this protein is 2-dehydro-3-deoxyphosphooctonate aldolase.